The following is a 146-amino-acid chain: Hemoglobin subunit beta (146 aa).

Val1 is subject to N-acetylvaline. In terms of domain architecture, Globin spans 2–146; sequence HLSGEEKAAV…VANALAHKYH (145 aa). Position 12 is a phosphothreonine (Thr12). A Phosphoserine modification is found at Ser44. Lys59 carries the N6-acetyllysine modification. His63 serves as a coordination point for heme b. Lys82 is modified (N6-acetyllysine). Residue His92 coordinates heme b. An S-nitrosocysteine modification is found at Cys93. An N6-acetyllysine modification is found at Lys144.

The protein belongs to the globin family. As to quaternary structure, heterotetramer of two alpha chains and two beta chains. As to expression, red blood cells.

Involved in oxygen transport from the lung to the various peripheral tissues. This is Hemoglobin subunit beta (HBB) from Tupaia glis (Common tree shrew).